The sequence spans 156 residues: ATP synthase subunit b (156 aa).

Residues 7–27 (LFLQAVVFAILVWFTMKFVWP) form a helical membrane-spanning segment.

Belongs to the ATPase B chain family. In terms of assembly, F-type ATPases have 2 components, F(1) - the catalytic core - and F(0) - the membrane proton channel. F(1) has five subunits: alpha(3), beta(3), gamma(1), delta(1), epsilon(1). F(0) has three main subunits: a(1), b(2) and c(10-14). The alpha and beta chains form an alternating ring which encloses part of the gamma chain. F(1) is attached to F(0) by a central stalk formed by the gamma and epsilon chains, while a peripheral stalk is formed by the delta and b chains.

It localises to the cell inner membrane. Functionally, f(1)F(0) ATP synthase produces ATP from ADP in the presence of a proton or sodium gradient. F-type ATPases consist of two structural domains, F(1) containing the extramembraneous catalytic core and F(0) containing the membrane proton channel, linked together by a central stalk and a peripheral stalk. During catalysis, ATP synthesis in the catalytic domain of F(1) is coupled via a rotary mechanism of the central stalk subunits to proton translocation. Component of the F(0) channel, it forms part of the peripheral stalk, linking F(1) to F(0). This is ATP synthase subunit b from Polaromonas naphthalenivorans (strain CJ2).